Consider the following 760-residue polypeptide: Anti-sigma-I factor RsgI6 (760 aa).

The Cytoplasmic portion of the chain corresponds to 1 to 55; the sequence is MIVGKVLDMDEKTAIIMTDDFAFLNVVRTSEMAVGKKVKVLDSDIIKPKNSLRRY. A RsgI N-terminal anti-sigma domain is found at 2–49; the sequence is IVGKVLDMDEKTAIIMTDDFAFLNVVRTSEMAVGKKVKVLDSDIIKPK. The helical transmembrane segment at 56-76 threads the bilayer; it reads LPVAAVAACFVIVLSFVLMFI. Over 77-760 the chain is Extracellular; sequence NGNTARKNIY…GTLQTTYRIP (684 aa). Positions 274-352 are disordered; that stretch reads AINTGPAESA…STPKPVSPVQ (79 aa). Residues 291–352 show a composition bias toward polar residues; it reads LPATSTPGRT…STPKPVSPVQ (62 aa). One can recognise a GH10 domain in the interval 402–701; the sequence is DSSNKPIENA…NEAGRRFESL (300 aa). E538 serves as the catalytic Proton donor. The active-site Nucleophile is the E635.

The protein in the C-terminal section; belongs to the glycosyl hydrolase 10 (cellulase F) family. As to quaternary structure, interacts (via RsgI N-terminal anti-sigma domain) with SigI6.

It localises to the cell membrane. The enzyme catalyses Endohydrolysis of (1-&gt;4)-beta-D-xylosidic linkages in xylans.. Its pathway is glycan degradation; xylan degradation. Anti-sigma factor for SigI6. Negatively regulates SigI6 activity through direct interaction. Binding of the polysaccharide substrate to the extracellular C-terminal sensing domain of RsgI6 may induce a conformational change in its N-terminal cytoplasmic region, leading to the release and activation of SigI6. Binds to and hydrolyzes insoluble and soluble xylan substrates. Has low enzymatic activity. The protein is Anti-sigma-I factor RsgI6 of Acetivibrio thermocellus (strain ATCC 27405 / DSM 1237 / JCM 9322 / NBRC 103400 / NCIMB 10682 / NRRL B-4536 / VPI 7372) (Clostridium thermocellum).